A 1322-amino-acid chain; its full sequence is MPVVWPTLLDLSRDECKRILRKLELEAYAGVISALRAQGDLTKEKKDLLGELSKVLSISTERHRAEVRRAVNDERLTTIAHNMSGPNSSSEWSIEGRRLVPLMPRLVPQTAFTVTANAVANAAIQHNASLPVPAETGSKEVVCYSYTSTTSTPTSTPVPSGSIATVKSPRPASPASNVVVLPSGSTVYVKSVSCSDEDEKPRKRRRTNSSSSSPVVLKEVPKAVVPVSKTITVPVSGSPKMSNIMQSIANSLPPHMSPVKITFTKPSTQTTNTTTQKVIIVTTSPSSTFVPNILSKSHNYAAVTKLVPTSVIASTTQKPPVVITASQSSLVSNSSSGSSSSTPSPIPNTVAVTAVVSSTPSVVMSTVAQGVSTSAIKMASTRLPSPKSLVSAPTQILAQFPKQHQQSPKQQLYQVQQQTQQQVAQPSPVSHQQQPQQSPLPPGIKPTIQIKQESGVKIITQQVQPSKILPKPVTATLPTSSNSPIMVVSSNGAIMTTKLVTTPTGTQATYTRPTVSPSIGRMAATPGAATYVKTTSGSIITVVPKSLATLGGKIISSNIVSGTTTKITTIPMTSKPNVIVVQKTTGKGTTIQGLPGKNVVTTLLNAGGEKTIQTVPTGAKPAILTATRPITKMIVTQPKGIGSTVQPAAKIIPTKIVYGQQGKTQVLIKPKPVTFQATVVSEQTRQLVTETLQQASRVAEAGNSSIQEGKEEPQNYTDSSSSSTESSQSSQDSQPVVHVIASRRQDWSEHEIAMETSPTIIYQDVSSESQSATSTIKALLELQQTTVKEKLESKPRQPTIDLSQMAVPIQMTQEKRHSPESPSIAVVESELVAEYITTERTDEGTEVAFPLLVSHRSQPQQPSQPQRTLLQHVAQSQTATQTSVVVKSIPASSPGAITHIMQQALSSHTAFTKHSEELGTEEGEVEEMDTLDPQTGLFYRSALTQSQSAKQQKLSQPPLEQTQLQVKTLQCFQTKQKQTIHLQADQLQHKLPQMPQLSIRHQKLTPLQQEQAQPKPDVQHTQHPMVAKDRQLPTLMAQPPQTVVQVLAVKTTQQLPKLQQAPNQPKIYVQPQTPQSQMSLPASSEKQTASQVEQPIITQGSSVTKITFEGRQPPTVTKITGGSSVPKLTSPVTSISPIQASEKTAVSDILKMSLMEAQIDTNVEHMIVDPPKKALATSMLTGEAGSLPSTHMVVAGMANSTPQQQKCRESCSSPSTVGSSLTTRKIDPPAVPATGQFMRIQNVGQKKAEESPAEIIIQAIPQYAIPCHSSSNVVVEPSGLLELNNFTSQQLDDEETAMEQDIDSSTEDGTEPSPSQSSAERS.

The interval 1-478 (MPVVWPTLLD…LPKPVTATLP (478 aa)) is interaction with BRCA2. The region spanning 16–100 (CKRILRKLEL…EWSIEGRRLV (85 aa)) is the ENT domain. Positions 104-108 (PRLVP) are interaction with ZMYND11. Residues 148–162 (STTSTPTSTPVPSGS) show a composition bias toward low complexity. 2 disordered regions span residues 148–178 (STTS…ASNV) and 192–215 (VSCS…SSPV). Thr-207 carries the post-translational modification Phosphothreonine. Phosphoserine occurs at positions 209 and 213. O-linked (GlcNAc) serine glycosylation is found at Ser-228 and Ser-236. Phosphoserine is present on Ser-238. An O-linked (GlcNAc) threonine glycan is attached at Thr-271. A compositionally biased stretch (low complexity) spans 417 to 437 (QQTQQQVAQPSPVSHQQQPQQ). The segment at 417–444 (QQTQQQVAQPSPVSHQQQPQQSPLPPGI) is disordered. Residues Thr-501 and Thr-506 are each glycosylated (O-linked (GlcNAc) threonine). Ser-557 carries an O-linked (GlcNAc) serine glycan. Positions 698 to 707 (VAEAGNSSIQ) are enriched in polar residues. A disordered region spans residues 698–736 (VAEAGNSSIQEGKEEPQNYTDSSSSSTESSQSSQDSQPV). A compositionally biased stretch (low complexity) spans 717–734 (TDSSSSSTESSQSSQDSQ). Phosphoserine is present on residues Ser-818 and Ser-821. O-linked (GlcNAc) threonine glycosylation occurs at Thr-1120. Ser-1136 bears the Phosphoserine mark. Residues 1205–1223 (QKCRESCSSPSTVGSSLTT) show a composition bias toward polar residues. Disordered stretches follow at residues 1205-1231 (QKCR…PPAV) and 1290-1322 (QLDD…AERS). Residues 1291 to 1310 (LDDEETAMEQDIDSSTEDGT) show a composition bias toward acidic residues. Over residues 1312–1322 (PSPSQSSAERS) the composition is skewed to polar residues.

In terms of assembly, homodimer. Interacts with the transactivation domain of BRCA2. Interacts with CBX1 (via chromoshadow domain). Interacts with ZMYND11. Does not interact with CBX3 or CBX5. Component of a nuclear receptor-mediated transcription complex composed of at least ZNF335, CCAR2 and EMSY; the complex stimulates the transcription of nuclear receptor target genes such as SOX9 and HOXA1. Within the complex interacts with CCAR2 and ZNF335. Components of this complex may associate with components of a histone methylation complex to form a complex at least composed of ZNF335, HCFC1, CCAR2, EMSY, MKI67, RBBP5, ASH2L and WDR5. Within this complex, interacts with ASH2L and RBBP5. In terms of processing, O-glycosylated during cytokinesis at sites identical or close to phosphorylation sites, this interferes with the phosphorylation status.

The protein localises to the nucleus. Regulator which is able to repress transcription, possibly via its interaction with a multiprotein chromatin remodeling complex that modifies the chromatin. Its interaction with BRCA2 suggests that it may play a central role in the DNA repair function of BRCA2. Mediates ligand-dependent transcriptional activation by nuclear hormone receptors. The sequence is that of BRCA2-interacting transcriptional repressor EMSY from Homo sapiens (Human).